Here is a 314-residue protein sequence, read N- to C-terminus: MSRPRRRGRDIHGVLLLDKPQGMSSNDVLQKVKRIYNANRAGHTGALDPLATGMLPICLGEATKFSQYLLDSDKRYRVIARLGQRTDTSDADGQIVQERPVTFSAEQLASALETFRGDIEQIPSMYSALKYQGKKLYEYARQGIEVPREARPITVYELLFIRHEGNELELEVHCSKGTYIRTIIDDLGEKLGCGAHVTYLRRLTVSKYPVDRMVTLEHLQTLVAQAEQQGVPAAQLLDPLLMPMDSPASDYPVVNLPLTSSVYFKNGNPVRTTGAPLKGLVRVTEGEDDKFIGMGEIDDEGRVAPRRLVVDYPA.

His43 provides a ligand contact to substrate. The active-site Nucleophile is Asp48. 3 residues coordinate substrate: Tyr76, Tyr179, and Leu200.

It belongs to the pseudouridine synthase TruB family. Type 1 subfamily.

It catalyses the reaction uridine(55) in tRNA = pseudouridine(55) in tRNA. In terms of biological role, responsible for synthesis of pseudouridine from uracil-55 in the psi GC loop of transfer RNAs. This chain is tRNA pseudouridine synthase B, found in Salmonella paratyphi B (strain ATCC BAA-1250 / SPB7).